The chain runs to 263 residues: HTH-type transcriptional repressor NanR (263 aa).

The segment at 1–25 (MDVMNAFDSQAEDSPTSLGRSLRRR) is disordered. One can recognise an HTH gntR-type domain in the interval 30–98 (KKLSEMVEEE…NGERARVSRP (69 aa)). The H-T-H motif DNA-binding region spans 58 to 77 (ERELMAFFNVGRPSVREALA).

This sequence belongs to the NanR family.

Functionally, transcriptional repressor that controls expression of the genes required for the catabolism of sialic acids. In Salmonella schwarzengrund (strain CVM19633), this protein is HTH-type transcriptional repressor NanR.